A 430-amino-acid chain; its full sequence is Adenylosuccinate synthetase (430 aa).

Residues 13-19 and 41-43 each bind GTP; these read GDEGKGK and GHT. D14 acts as the Proton acceptor in catalysis. D14 and G41 together coordinate Mg(2+). IMP-binding positions include 14 to 17, 39 to 42, T130, R144, Q225, T240, and R304; these read DEGK and NAGH. The Proton donor role is filled by H42. Residue 300-306 coordinates substrate; sequence STTGRAR. GTP is bound by residues R306, 332 to 334, and 414 to 416; these read KLD and STG.

Belongs to the adenylosuccinate synthetase family. In terms of assembly, homodimer. Mg(2+) is required as a cofactor.

The protein resides in the cytoplasm. The catalysed reaction is IMP + L-aspartate + GTP = N(6)-(1,2-dicarboxyethyl)-AMP + GDP + phosphate + 2 H(+). Its pathway is purine metabolism; AMP biosynthesis via de novo pathway; AMP from IMP: step 1/2. Its function is as follows. Plays an important role in the de novo pathway of purine nucleotide biosynthesis. Catalyzes the first committed step in the biosynthesis of AMP from IMP. This is Adenylosuccinate synthetase from Thioalkalivibrio sulfidiphilus (strain HL-EbGR7).